The sequence spans 2314 residues: A-kinase anchor protein 6 (2314 aa).

Positions 1–12 (MLTMSVTLSPLR) are enriched in polar residues. Disordered regions lie at residues 1 to 25 (MLTMSVTLSPLRSQGPDPMATDASP), 285 to 432 (PSSC…DPPD), 505 to 613 (SLCR…PCHA), and 736 to 755 (TDEKSERPSSSEKNESHSAT). A compositionally biased stretch (basic and acidic residues) spans 301-311 (SDDHKGEHGED). Positions 319–330 (QLDSTVGMSSLD) are enriched in polar residues. The span at 398 to 420 (ETQKNERKGSDRKGQVVDLKPEL) shows a compositional bias: basic and acidic residues. Low complexity predominate over residues 569-592 (SKASSSPPCSHSSESSLGSDSIKS). The span at 736–753 (TDEKSERPSSSEKNESHS) shows a compositional bias: basic and acidic residues. Spectrin repeat units lie at residues 768-847 (QHQE…QLLE) and 1033-1148 (ILEK…LLDD). The residue at position 1072 (S1072) is a Phosphoserine. Positions 1349-1401 (CHSGDLSQNSGSESGIVSEGDNEMPTNSDMSLFSMVDGSPSNPETEHPDPQMG) are disordered. The span at 1353-1363 (DLSQNSGSESG) shows a compositional bias: polar residues. 2 positions are modified to phosphoserine: S1568 and S1593. 2 stretches are compositionally biased toward basic and acidic residues: residues 1816–1831 (RSGVTDEIKVNKDGGG) and 1874–1891 (GENKKSTYDVSKDPHVAD). Disordered stretches follow at residues 1816 to 1838 (RSGVTDEIKVNKDGGGNEKANPS), 1854 to 1926 (LSEN…KTIS), and 1940 to 2012 (SEDS…SGAR). Polar residues predominate over residues 1917–1926 (NLASNVKTIS). A compositionally biased stretch (basic and acidic residues) spans 1944–1958 (SVARKEFCPPNDRHP). The segment at 2062–2075 (IIDMASTALKSKSQ) is PKA-RII subunit binding domain. The disordered stretch occupies residues 2166-2286 (EEAGLPGALP…NAKQPKGKVA (121 aa)). Positions 2215-2226 (GADDAKEGDDVS) are enriched in basic and acidic residues. A compositionally biased stretch (polar residues) spans 2227–2243 (HTSQGCAESTEPTTPSG).

Interacts with RII subunit of PKA, phosphatase 2B (calcineurin) and AKAP79. Interacts with SYNPO2.

It is found in the sarcoplasmic reticulum. The protein localises to the nucleus membrane. Binds to type II regulatory subunits of protein kinase A and anchors/targets them to the nuclear membrane or sarcoplasmic reticulum. May act as an adapter for assembling multiprotein complexes. The protein is A-kinase anchor protein 6 (Akap6) of Rattus norvegicus (Rat).